Reading from the N-terminus, the 884-residue chain is Telomerase reverse transcriptase (884 aa).

Positions 422–725 constitute a Reverse transcriptase domain; sequence CRNHNSYTLS…TVIQFCAMHI (304 aa). The Mg(2+) site is built by aspartate 530, aspartate 670, and aspartate 671.

Belongs to the reverse transcriptase family. Telomerase subfamily. Catalytic subunit of the telomerase holoenzyme complex composed minimally of EST2 and the telomerase RNA template component.

Its subcellular location is the nucleus. It is found in the chromosome. The protein localises to the telomere. It carries out the reaction DNA(n) + a 2'-deoxyribonucleoside 5'-triphosphate = DNA(n+1) + diphosphate. Functionally, telomerase is a ribonucleoprotein enzyme essential for the replication of chromosome termini in most eukaryotes. It elongates telomeres. It is a reverse transcriptase that adds simple sequence repeats to chromosome ends by copying a template sequence within the RNA component of the enzyme. This chain is Telomerase reverse transcriptase (EST2), found in Saccharomyces cerevisiae (strain ATCC 204508 / S288c) (Baker's yeast).